A 170-amino-acid chain; its full sequence is uncharacterized protein (170 aa).

Positions 15–81 form a coiled coil; sequence EAFDEKAEKE…EREKSKSAVS (67 aa). The segment covering 20–77 has biased composition (basic and acidic residues); that stretch reads KAEKEKVEKEKALKEKTEKEKAEKEKAEKEKVEKEKAEKEKAAKEKAAKEKAEREKSK. Residues 20–95 form a disordered region; the sequence is KAEKEKVEKE…NQNSNKGNVE (76 aa). A compositionally biased stretch (polar residues) spans 78 to 92; sequence SAVSPATTNQNSNKG. Residues 98 to 118 form a helical membrane-spanning segment; that stretch reads VAIGVLAGGAVTGVAVGGAYL.

The protein resides in the membrane. This is an uncharacterized protein from Dictyostelium discoideum (Social amoeba).